Reading from the N-terminus, the 39-residue chain is Contryphan-Cal2 (39 aa).

An N-terminal signal peptide occupies residues 1-20 (MTRTAVLLLTLLFLVAMAAS). A disulfide bridge connects residues Cys-29 and Cys-35.

In terms of tissue distribution, expressed by the venom duct.

Its subcellular location is the secreted. Probable neurotoxin. This is Contryphan-Cal2 from Californiconus californicus (California cone).